A 1099-amino-acid polypeptide reads, in one-letter code: Carbamoyl phosphate synthase large chain (1099 aa).

Residues 1–402 (MPRREDIKRI…ALGKALRSLE (402 aa)) form a carboxyphosphate synthetic domain region. ATP-binding residues include R129, R169, G175, G176, E208, V210, E215, G241, I242, H243, Q285, and E299. Residues 133–328 (KKTMEEAGLE…IAKIAALLAV (196 aa)) form the ATP-grasp 1 domain. Residues Q285, E299, and N301 each coordinate Mg(2+). Mn(2+) is bound by residues Q285, E299, and N301. Residues 403-541 (LDAAPKLDLD…STYNGVENEA (139 aa)) are oligomerization domain. Residues 542–944 (IPTDKEKIMI…AFAKAEIAAG (403 aa)) form a carbamoyl phosphate synthetic domain region. In terms of domain architecture, ATP-grasp 2 spans 666–857 (AKLLKRIGLR…VAKIAAKIMV (192 aa)). Positions 702, 741, 743, 748, 773, 774, 775, 776, 816, and 828 each coordinate ATP. Q816, E828, and N830 together coordinate Mg(2+). 3 residues coordinate Mn(2+): Q816, E828, and N830. Residues 945–1099 (NPLPTEGAIL…VRKLTDTWKM (155 aa)) enclose the MGS-like domain. An allosteric domain region spans residues 945–1099 (NPLPTEGAIL…VRKLTDTWKM (155 aa)).

The protein belongs to the CarB family. Composed of two chains; the small (or glutamine) chain promotes the hydrolysis of glutamine to ammonia, which is used by the large (or ammonia) chain to synthesize carbamoyl phosphate. Tetramer of heterodimers (alpha,beta)4. Mg(2+) serves as cofactor. Requires Mn(2+) as cofactor.

It catalyses the reaction hydrogencarbonate + L-glutamine + 2 ATP + H2O = carbamoyl phosphate + L-glutamate + 2 ADP + phosphate + 2 H(+). It carries out the reaction hydrogencarbonate + NH4(+) + 2 ATP = carbamoyl phosphate + 2 ADP + phosphate + 2 H(+). The protein operates within amino-acid biosynthesis; L-arginine biosynthesis; carbamoyl phosphate from bicarbonate: step 1/1. It participates in pyrimidine metabolism; UMP biosynthesis via de novo pathway; (S)-dihydroorotate from bicarbonate: step 1/3. Its function is as follows. Large subunit of the glutamine-dependent carbamoyl phosphate synthetase (CPSase). CPSase catalyzes the formation of carbamoyl phosphate from the ammonia moiety of glutamine, carbonate, and phosphate donated by ATP, constituting the first step of 2 biosynthetic pathways, one leading to arginine and/or urea and the other to pyrimidine nucleotides. The large subunit (synthetase) binds the substrates ammonia (free or transferred from glutamine from the small subunit), hydrogencarbonate and ATP and carries out an ATP-coupled ligase reaction, activating hydrogencarbonate by forming carboxy phosphate which reacts with ammonia to form carbamoyl phosphate. The polypeptide is Carbamoyl phosphate synthase large chain (Thermotoga neapolitana (strain ATCC 49049 / DSM 4359 / NBRC 107923 / NS-E)).